A 921-amino-acid polypeptide reads, in one-letter code: Valine--tRNA ligase (921 aa).

Residues P40–H50 carry the 'HIGH' region motif. The 'KMSKS' region signature appears at K522–S526. K525 is a binding site for ATP. A coiled-coil region spans residues M849–L921.

The protein belongs to the class-I aminoacyl-tRNA synthetase family. ValS type 1 subfamily. Monomer.

Its subcellular location is the cytoplasm. It catalyses the reaction tRNA(Val) + L-valine + ATP = L-valyl-tRNA(Val) + AMP + diphosphate. Catalyzes the attachment of valine to tRNA(Val). As ValRS can inadvertently accommodate and process structurally similar amino acids such as threonine, to avoid such errors, it has a 'posttransfer' editing activity that hydrolyzes mischarged Thr-tRNA(Val) in a tRNA-dependent manner. This Legionella pneumophila (strain Paris) protein is Valine--tRNA ligase.